A 160-amino-acid chain; its full sequence is Epithelial membrane protein 1 (160 aa).

Residues 1–21 (MLVLLAGLFVVHIATAIMLFV) traverse the membrane as a helical segment. N-linked (GlcNAc...) asparagine glycosylation occurs at Asn-43. The next 3 membrane-spanning stretches (helical) occupy residues 67 to 87 (FMIL…FQLF), 95 to 115 (FFLS…GVSI), and 137 to 157 (FILT…YMVL).

The protein belongs to the PMP-22/EMP/MP20 family. As to expression, most prominently found in the gastrointestinal tract, skin, lung, and brain but not in liver.

The protein resides in the membrane. This chain is Epithelial membrane protein 1 (Emp1), found in Rattus norvegicus (Rat).